The following is a 621-amino-acid chain: Methionine--tRNA ligase (621 aa).

The short motif at 11–21 (PYANGPRHIGH) is the 'HIGH' region element. Positions 143, 146, 156, and 159 each coordinate Zn(2+). The 'KMSKS' region motif lies at 347–351 (KFSSS). Ser350 provides a ligand contact to ATP.

The protein belongs to the class-I aminoacyl-tRNA synthetase family. MetG type 1 subfamily. Monomer. It depends on Zn(2+) as a cofactor.

The protein localises to the cytoplasm. It catalyses the reaction tRNA(Met) + L-methionine + ATP = L-methionyl-tRNA(Met) + AMP + diphosphate. In terms of biological role, is required not only for elongation of protein synthesis but also for the initiation of all mRNA translation through initiator tRNA(fMet) aminoacylation. The sequence is that of Methionine--tRNA ligase from Bifidobacterium longum (strain NCC 2705).